The following is a 499-amino-acid chain: MGVVLLPPPLSMLMLVLMLLPAASASEAEHRLFQYLFEDYNEIIRPVANVSHPVIIQFEVSMSQLVKVDEVNQIMETNLWLKQIWNDYKLKWKPSDYQGVEFMRVPAEKIWKPDIVLYNNADGDFQVDDKTKALLKYTGEVTWIPPAIFKSSCKIDVTYFPFDYQNCTMKFGSWSYDKAKIDLVLIGSSMNLKDYWESGEWAIIKAPGYKHEIKYNCCEEIYQDITYSLYIRRLPLFYTINLIIPCLLISFLTVLVFYLPSDCGEKVTLCISVLLSLTVFLLVITETIPSTSLVIPLIGEYLLFTMIFVTLSIVITVFVLNVHYRTPTTHTMPTWVKAVFLNLLPRVMFMTRPTSGEGDTPKTRTFYGAELSNLNCFSRADSKSCKEGYPCQDGTCGYCHHRRVKISNFSANLTRSSSSESVNAVLSLSALSPEIKEAIQSVKYIAENMKAQNVAKEIQDDWKYVAMVIDRIFLWVFILVCILGTAGLFLQPLMARDDT.

The N-terminal stretch at 1–25 is a signal peptide; that stretch reads MGVVLLPPPLSMLMLVLMLLPAASA. Topologically, residues 26-244 are extracellular; that stretch reads SEAEHRLFQY…PLFYTINLII (219 aa). Residues Asn-49 and Asn-166 are each glycosylated (N-linked (GlcNAc...) asparagine). Cystine bridges form between Cys-153/Cys-167 and Cys-217/Cys-218. A helical membrane pass occupies residues 245–260; it reads PCLLISFLTVLVFYLP. At 261–262 the chain is on the cytoplasmic side; it reads SD. The chain crosses the membrane as a helical span at residues 263-279; that stretch reads CGEKVTLCISVLLSLTV. Glu-265 contacts Na(+). The Extracellular segment spans residues 280 to 301; that stretch reads FLLVITETIPSTSLVIPLIGEY. Residues 302 to 320 traverse the membrane as a helical segment; the sequence is LLFTMIFVTLSIVITVFVL. Residues 321–468 are Cytoplasmic-facing; it reads NVHYRTPTTH…QDDWKYVAMV (148 aa). Phosphoserine is present on residues Ser-407 and Ser-410. Residues 469 to 487 traverse the membrane as a helical segment; it reads IDRIFLWVFILVCILGTAG. Over 488-499 the chain is Extracellular; that stretch reads LFLQPLMARDDT.

Belongs to the ligand-gated ion channel (TC 1.A.9) family. Acetylcholine receptor (TC 1.A.9.1) subfamily. Alpha-3/CHRNA3 sub-subfamily. As to quaternary structure, neuronal AChR is composed of two different types of subunits: alpha and beta. CHRNA3/Alpha-3 subunit can be combined to CHRNB2/beta-2 or CHRNB4/beta-4 to give rise to functional receptors. Part of a complex composed of STUB1/CHIP, VCP/p97, CHRNA3, and UBXN2A that modulates the ubiquitination and endoplasmic reticulum-associated degradation (ERAD) of CHRNA3. Within the complex UBXN2A acts as a scaffold protein required for the interaction of CHRNA3 with VCP/p97, this interaction also inhibits CHRNA3 ubiquitination by STUB1/CHIP and subsequently ERAD. Interacts with UBXN2A (via SEP domain), the interaction is required for the interaction of CHRNA3 in the STUB1:VCP:UBXN2A complex. Interacts with RIC3; which is required for proper folding and assembly. Ubiquitinated; by STUB1/CHIP and thereafter degraded by the 26S proteosome complex. In terms of tissue distribution, expressed in neurons. Expressed in umbrella cells of urothelium (at protein level).

It is found in the synaptic cell membrane. The protein localises to the cell membrane. The protein resides in the endoplasmic reticulum. Its subcellular location is the golgi apparatus. It catalyses the reaction Ca(2+)(in) = Ca(2+)(out). The catalysed reaction is K(+)(in) = K(+)(out). It carries out the reaction Na(+)(in) = Na(+)(out). Its activity is regulated as follows. Activated by a myriad of ligands such as acetylcholine, cytisine, nicotine, choline and epibatidine. The heteropentamer CHRNA3:CHRNB2 activity is blocked by alpha-conotoxins ImI, ImII, PnIA, GID and MII. The heteropentamer CHRNA3:CHRNB4 activity is blocked by the alpha-conotoxin ImI and AuIB. In terms of biological role, component of neuronal acetylcholine receptors (nAChRs) that function as pentameric, ligand-gated cation channels with high calcium permeability among other activities. nAChRs are excitatory neurotrasnmitter receptors formed by a collection of nAChR subunits known to mediate synaptic transmission in the nervous system and the neuromuscular junction. Each nAchR subunit confers differential attributes to channel properties, including activation, deactivation and desensitization kinetics, pH sensitivity, cation permeability, and binding to allosteric modulators. CHRNA3 forms heteropentameric neuronal acetylcholine receptors with CHRNB2 and CHRNB4. CHRNA3:CHRNB4 being predominant in neurons of the autonomic ganglia, it is known as ganglionic nicotinic receptor. CHRNA3:CHRNB4 also plays an important role in the habenulo-interpeduncular tract, modulating the mesolimbic dopamine system and affecting reward circuits and addiction. Hypothalamic CHRNA3:CHRNB4 nAChR activation by nicotine leads to activation of POMC neurons and a decrease in food intake. Also expressed in the urothelium where it modulates reflex bladder activity by increasing intracellular calcium through extracellular influx and basal ATP release. The sequence is that of Neuronal acetylcholine receptor subunit alpha-3 (Chrna3) from Rattus norvegicus (Rat).